The sequence spans 304 residues: HPr kinase/phosphorylase (304 aa).

Catalysis depends on residues His-136 and Lys-157. Gly-151–Ser-158 provides a ligand contact to ATP. Ser-158 is a Mg(2+) binding site. Asp-175 (proton acceptor; for phosphorylation activity. Proton donor; for dephosphorylation activity) is an active-site residue. Residues Leu-198–Asp-207 form an important for the catalytic mechanism of both phosphorylation and dephosphorylation region. Residue Glu-199 coordinates Mg(2+). The active site involves Arg-240. The tract at residues Pro-261–Arg-266 is important for the catalytic mechanism of dephosphorylation.

This sequence belongs to the HPrK/P family. In terms of assembly, homohexamer. The cofactor is Mg(2+).

The enzyme catalyses [HPr protein]-L-serine + ATP = [HPr protein]-O-phospho-L-serine + ADP + H(+). The catalysed reaction is [HPr protein]-O-phospho-L-serine + phosphate + H(+) = [HPr protein]-L-serine + diphosphate. In terms of biological role, catalyzes the ATP- as well as the pyrophosphate-dependent phosphorylation of a specific serine residue in HPr, a phosphocarrier protein of the phosphoenolpyruvate-dependent sugar phosphotransferase system (PTS). HprK/P also catalyzes the pyrophosphate-producing, inorganic phosphate-dependent dephosphorylation (phosphorolysis) of seryl-phosphorylated HPr (P-Ser-HPr). The two antagonistic activities of HprK/P are regulated by several intracellular metabolites, which change their concentration in response to the absence or presence of rapidly metabolisable carbon sources (glucose, fructose, etc.) in the growth medium. Therefore, by controlling the phosphorylation state of HPr, HPrK/P is a sensor enzyme that plays a major role in the regulation of carbon metabolism and sugar transport: it mediates carbon catabolite repression (CCR), and regulates PTS-catalyzed carbohydrate uptake and inducer exclusion. The polypeptide is HPr kinase/phosphorylase (Clostridium botulinum (strain Eklund 17B / Type B)).